The primary structure comprises 32 residues: Trypsin inhibitor 2b (32 aa).

3 cysteine pairs are disulfide-bonded: cysteine 3/cysteine 20, cysteine 10/cysteine 22, and cysteine 16/cysteine 29.

This sequence belongs to the protease inhibitor I7 (squash-type serine protease inhibitor) family.

The protein localises to the secreted. In terms of biological role, inhibits trypsin. This chain is Trypsin inhibitor 2b, found in Cucumis sativus (Cucumber).